The primary structure comprises 301 residues: G-protein coupled receptor homolog U51 (301 aa).

The Extracellular portion of the chain corresponds to 1 to 15 (MEKETKSLAWPATAE). Residues 16 to 36 (FYGWVFIFSSIQLCTVVFLTV) traverse the membrane as a helical segment. Residues 37-48 (RFNGFKVGREYA) lie on the Cytoplasmic side of the membrane. A helical transmembrane segment spans residues 49 to 69 (VFTFAGMSFNCFLLPIKMGLL). Residues 70-82 (SGHWTLPRDFCAI) are Extracellular-facing. Residues 83 to 103 (LLYIDDFSAYFSSWSLVFMAI) form a helical membrane-spanning segment. The Cytoplasmic portion of the chain corresponds to 104-122 (ERINYFCYSTPLLNENSKA). Residues 123–143 (LAKVCFPIVWVVSGVQALQML) traverse the membrane as a helical segment. The Extracellular segment spans residues 144 to 168 (NNYKATALQNETGQCFLAFLRSGHD). Asn-153 carries N-linked (GlcNAc...) asparagine; by host glycosylation. A helical membrane pass occupies residues 169–189 (MWLMLVYSVVIPVMLVFFYLY). Over 190–199 (SKNFMLLKDE) the chain is Cytoplasmic. Residues 200 to 220 (LSSVTTYLCIYLLLGTIAHLP) form a helical membrane-spanning segment. Residues 221–238 (KAALSEIESDKIFYGLRD) lie on the Extracellular side of the membrane. A helical membrane pass occupies residues 239–259 (IFMALPVLKVYYISAMAYCMA). Topologically, residues 260–301 (CDDHTVPVRLCSIWLVNLCKKCFSCTRREKGSDLEVGIKMLK) are cytoplasmic.

Belongs to the G-protein coupled receptor 1 family.

The protein localises to the host cell membrane. This is G-protein coupled receptor homolog U51 (U51) from Homo sapiens (Human).